The chain runs to 388 residues: 1-deoxy-D-xylulose 5-phosphate reductoisomerase (388 aa).

6 residues coordinate NADPH: T10, G11, S12, I13, N37, and N121. K122 is a binding site for 1-deoxy-D-xylulose 5-phosphate. E123 is a binding site for NADPH. D147 contacts Mn(2+). Residues S148, E149, S173, and H196 each coordinate 1-deoxy-D-xylulose 5-phosphate. E149 is a binding site for Mn(2+). G202 provides a ligand contact to NADPH. Residues S209, N214, K215, and E218 each coordinate 1-deoxy-D-xylulose 5-phosphate. E218 is a Mn(2+) binding site.

It belongs to the DXR family. It depends on Mg(2+) as a cofactor. Mn(2+) serves as cofactor.

It catalyses the reaction 2-C-methyl-D-erythritol 4-phosphate + NADP(+) = 1-deoxy-D-xylulose 5-phosphate + NADPH + H(+). The protein operates within isoprenoid biosynthesis; isopentenyl diphosphate biosynthesis via DXP pathway; isopentenyl diphosphate from 1-deoxy-D-xylulose 5-phosphate: step 1/6. Catalyzes the NADPH-dependent rearrangement and reduction of 1-deoxy-D-xylulose-5-phosphate (DXP) to 2-C-methyl-D-erythritol 4-phosphate (MEP). The sequence is that of 1-deoxy-D-xylulose 5-phosphate reductoisomerase from Lachnoclostridium phytofermentans (strain ATCC 700394 / DSM 18823 / ISDg) (Clostridium phytofermentans).